A 156-amino-acid polypeptide reads, in one-letter code: Small ribosomal subunit protein uS7c (156 aa).

Belongs to the universal ribosomal protein uS7 family. Part of the 30S ribosomal subunit.

The protein localises to the plastid. It is found in the chloroplast. Functionally, one of the primary rRNA binding proteins, it binds directly to 16S rRNA where it nucleates assembly of the head domain of the 30S subunit. The protein is Small ribosomal subunit protein uS7c (rps7) of Tupiella akineta (Green alga).